The following is a 179-amino-acid chain: UPF0302 protein BPUM_1989 (179 aa).

The protein belongs to the UPF0302 family.

The protein is UPF0302 protein BPUM_1989 of Bacillus pumilus (strain SAFR-032).